The chain runs to 244 residues: Rho-related GTP-binding protein RhoE (244 aa).

Residue 30 to 37 (GDSQCGKT) coordinates GTP. The short motif at 52–60 (YVPTVFENY) is the Effector region element. GTP-binding positions include 77 to 81 (DTSGS) and 135 to 138 (CKSD). Cys241 is subject to Cysteine methyl ester. Cys241 carries the S-farnesyl cysteine lipid modification. A propeptide spans 242–244 (TVM) (removed in mature form).

The protein belongs to the small GTPase superfamily. Rho family. In terms of assembly, binds ROCK1. Interacts with UBXD5. As to expression, ubiquitous.

It localises to the golgi apparatus membrane. Binds GTP but lacks intrinsic GTPase activity and is resistant to Rho-specific GTPase-activating proteins. The protein is Rho-related GTP-binding protein RhoE (RND3) of Homo sapiens (Human).